We begin with the raw amino-acid sequence, 547 residues long: Chaperonin GroEL (547 aa).

ATP contacts are provided by residues 30–33 (TLGP), K51, 87–91 (DGTTT), G415, and D496.

This sequence belongs to the chaperonin (HSP60) family. Forms a cylinder of 14 subunits composed of two heptameric rings stacked back-to-back. Interacts with the co-chaperonin GroES.

It is found in the cytoplasm. It carries out the reaction ATP + H2O + a folded polypeptide = ADP + phosphate + an unfolded polypeptide.. Together with its co-chaperonin GroES, plays an essential role in assisting protein folding. The GroEL-GroES system forms a nano-cage that allows encapsulation of the non-native substrate proteins and provides a physical environment optimized to promote and accelerate protein folding. The protein is Chaperonin GroEL of Pelodictyon phaeoclathratiforme (strain DSM 5477 / BU-1).